The sequence spans 34 residues: Kappa-theraphotoxin-Sc1a (34 aa).

Cystine bridges form between cysteine 2-cysteine 16, cysteine 9-cysteine 21, and cysteine 15-cysteine 28. Isoleucine 34 carries the post-translational modification Isoleucine amide.

This sequence belongs to the neurotoxin 10 (Hwtx-1) family. 57 (ScTx1) subfamily. As to expression, expressed by the venom gland.

Its subcellular location is the secreted. In terms of biological role, acts as a gating-modifier to inhibit voltage-gated potassium channels. It inhibits delayed Kv2.1/KCNB1 (IC(50) is 12.7 nM), Kv2.1/Kv9.3 (IC(50) is 7.2 nM) (KCNB1/KCNS3), Kv2.2/KCNB2 (IC(50) is 21.4 nM), and transient Kv4.2/KCND2 (IC(50) is 1.2 nM) channels. This is Kappa-theraphotoxin-Sc1a from Stromatopelma calceatum (Featherleg baboon tarantula).